Consider the following 68-residue polypeptide: Sec-independent protein translocase protein TatA (68 aa).

The helical transmembrane segment at 1–21 threads the bilayer; the sequence is MGSFSIWHWLIVLAVVLLLFG. The tract at residues 42 to 68 is disordered; it reads GMGDDEVASADKSVDGKTVDHKSDEVR. Residues 53 to 68 show a composition bias toward basic and acidic residues; that stretch reads KSVDGKTVDHKSDEVR.

The protein belongs to the TatA/E family. The Tat system comprises two distinct complexes: a TatABC complex, containing multiple copies of TatA, TatB and TatC subunits, and a separate TatA complex, containing only TatA subunits. Substrates initially bind to the TatABC complex, which probably triggers association of the separate TatA complex to form the active translocon.

It is found in the cell inner membrane. Part of the twin-arginine translocation (Tat) system that transports large folded proteins containing a characteristic twin-arginine motif in their signal peptide across membranes. TatA could form the protein-conducting channel of the Tat system. The polypeptide is Sec-independent protein translocase protein TatA (Rhizobium meliloti (strain 1021) (Ensifer meliloti)).